Reading from the N-terminus, the 332-residue chain is Nucleotide-binding protein RC1_2868 (332 aa).

Positions 1–27 (MTGQPLTMETAAGADAGTGAATHPADG) are disordered. The span at 10-22 (TAAGADAGTGAAT) shows a compositional bias: low complexity. 36–43 (GMSGGGLS) serves as a coordination point for ATP. 82 to 85 (DSRT) serves as a coordination point for GTP. Composition is skewed to basic and acidic residues over residues 302 to 312 (GHRDLDRRHPA) and 322 to 332 (VASRETPEEHR). The segment at 302–332 (GHRDLDRRHPAPEPAPPWREVASRETPEEHR) is disordered.

Belongs to the RapZ-like family.

Displays ATPase and GTPase activities. In Rhodospirillum centenum (strain ATCC 51521 / SW), this protein is Nucleotide-binding protein RC1_2868.